The following is a 98-amino-acid chain: Large ribosomal subunit protein eL21 (98 aa).

Belongs to the eukaryotic ribosomal protein eL21 family.

The sequence is that of Large ribosomal subunit protein eL21 from Methanocorpusculum labreanum (strain ATCC 43576 / DSM 4855 / Z).